The primary structure comprises 376 residues: 2-oxoglutarate synthase subunit KorA (376 aa).

Heterotetramer of the KorA, KorB, KorC and KorD subunits.

The catalysed reaction is 2 oxidized [2Fe-2S]-[ferredoxin] + 2-oxoglutarate + CoA = succinyl-CoA + 2 reduced [2Fe-2S]-[ferredoxin] + CO2 + H(+). The protein is 2-oxoglutarate synthase subunit KorA (korA) of Methanothermobacter thermautotrophicus (strain ATCC 29096 / DSM 1053 / JCM 10044 / NBRC 100330 / Delta H) (Methanobacterium thermoautotrophicum).